The chain runs to 567 residues: Urease subunit alpha (567 aa).

Positions 134, 136, and 217 each coordinate Ni(2+). K217 bears the N6-carboxylysine mark. Residue H219 coordinates substrate. Ni(2+)-binding residues include H246 and H272. H320 (proton donor) is an active-site residue. D360 serves as a coordination point for Ni(2+).

Belongs to the metallo-dependent hydrolases superfamily. Urease alpha subunit family. As to quaternary structure, heterotrimer of UreA (gamma), UreB (beta) and UreC (alpha) subunits. Three heterotrimers associate to form the active enzyme. Ni cation is required as a cofactor. In terms of processing, carboxylation allows a single lysine to coordinate two nickel ions.

The protein localises to the cytoplasm. The catalysed reaction is urea + 2 H2O + H(+) = hydrogencarbonate + 2 NH4(+). It functions in the pathway nitrogen metabolism; urea degradation; CO(2) and NH(3) from urea (urease route): step 1/1. The polypeptide is Urease subunit alpha (Pseudomonas putida (strain GB-1)).